Reading from the N-terminus, the 177-residue chain is Probable DNA-directed RNA polymerase subunit delta (177 aa).

The region spanning 14 to 83 is the HTH HARE-type domain; it reads LSMIEVARAI…GENKWGLRSW (70 aa). 2 stretches are compositionally biased toward acidic residues: residues 117–134 and 142–157; these read GDDDAIDYGHDDPEDEDN and EYDDENPDDEKDEVES. A disordered region spans residues 117-164; the sequence is GDDDAIDYGHDDPEDEDNYPGSVSSEYDDENPDDEKDEVESYDQKSTK.

It belongs to the RpoE family. As to quaternary structure, RNAP is composed of a core of 2 alpha, a beta and a beta' subunits. The core is associated with a delta subunit and one of several sigma factors.

Participates in both the initiation and recycling phases of transcription. In the presence of the delta subunit, RNAP displays an increased specificity of transcription, a decreased affinity for nucleic acids, and an increased efficiency of RNA synthesis because of enhanced recycling. The sequence is that of Probable DNA-directed RNA polymerase subunit delta from Streptococcus suis (strain 98HAH33).